The following is a 468-amino-acid chain: ATP synthase subunit beta (468 aa).

Residue 148–155 (GGAGVGKT) coordinates ATP.

This sequence belongs to the ATPase alpha/beta chains family. In terms of assembly, F-type ATPases have 2 components, CF(1) - the catalytic core - and CF(0) - the membrane proton channel. CF(1) has five subunits: alpha(3), beta(3), gamma(1), delta(1), epsilon(1). CF(0) has three main subunits: a(1), b(2) and c(9-12). The alpha and beta chains form an alternating ring which encloses part of the gamma chain. CF(1) is attached to CF(0) by a central stalk formed by the gamma and epsilon chains, while a peripheral stalk is formed by the delta and b chains.

Its subcellular location is the cell inner membrane. The enzyme catalyses ATP + H2O + 4 H(+)(in) = ADP + phosphate + 5 H(+)(out). In terms of biological role, produces ATP from ADP in the presence of a proton gradient across the membrane. The catalytic sites are hosted primarily by the beta subunits. The chain is ATP synthase subunit beta from Xanthomonas campestris pv. campestris (strain B100).